The sequence spans 129 residues: Large ribosomal subunit protein bL21 (129 aa).

It belongs to the bacterial ribosomal protein bL21 family. Part of the 50S ribosomal subunit. Contacts protein L20.

Its function is as follows. This protein binds to 23S rRNA in the presence of protein L20. The protein is Large ribosomal subunit protein bL21 of Microcystis aeruginosa (strain NIES-843 / IAM M-2473).